The following is a 182-amino-acid chain: ADP-ribosylation factor 1 (182 aa).

Gly-2 carries the N-myristoyl glycine lipid modification. GTP contacts are provided by residues 24–31, 67–71, and 126–129; these read GLDAAGKT, DVGGQ, and NKQD.

The protein belongs to the small GTPase superfamily. Arf family.

It localises to the golgi apparatus. The enzyme catalyses GTP + H2O = GDP + phosphate + H(+). Its function is as follows. GTP-binding protein involved in protein trafficking; may modulate vesicle budding and uncoating within the Golgi apparatus. This chain is ADP-ribosylation factor 1 (arfA), found in Dictyostelium discoideum (Social amoeba).